Reading from the N-terminus, the 289-residue chain is Pteridine reductase 1 (289 aa).

14-41 (GAAKRLGSSIAEALHAEGYTVCLHYHRS) serves as a coordination point for NADP(+). S176 serves as a coordination point for substrate. Residue Y195 is the Proton acceptor of the active site. 195–199 (YTMAK) lines the NADP(+) pocket.

This sequence belongs to the short-chain dehydrogenases/reductases (SDR) family. As to quaternary structure, homotetramer.

It carries out the reaction (6R)-L-erythro-5,6,7,8-tetrahydrobiopterin + 2 NADP(+) = L-erythro-biopterin + 2 NADPH + 2 H(+). It functions in the pathway cofactor biosynthesis; tetrahydrobiopterin biosynthesis; tetrahydrobiopterin from biopterin: step 1/1. In terms of biological role, exhibits a NADPH-dependent biopterin reductase activity. Has good activity with folate and significant activity with dihydrofolate and dihydrobiopterin, but not with quinonoid dihydrobiopterin. Confers resistance to methotrexate (MTX). In Leishmania tarentolae (Sauroleishmania tarentolae), this protein is Pteridine reductase 1 (PTR1).